Reading from the N-terminus, the 460-residue chain is NADH-ubiquinone oxidoreductase chain 4 (460 aa).

The next 12 membrane-spanning stretches (helical) occupy residues 20 to 42 (PKWL…LMWF), 61 to 81 (PLST…ILAS), 93 to 113 (QRLY…AFGA), 114 to 134 (TEII…LIII), 148 to 168 (TYFL…LLLL), 195 to 215 (IWWA…GVHL), 225 to 245 (PVAG…YGMM), 258 to 278 (LAYP…SICL), 285 to 304 (SLIA…GILI), 308 to 330 (WGFS…LFCL), 351 to 371 (IIFP…LALP), and 394 to 414 (ILLT…MFLM).

This sequence belongs to the complex I subunit 4 family.

The protein localises to the mitochondrion membrane. The enzyme catalyses a ubiquinone + NADH + 5 H(+)(in) = a ubiquinol + NAD(+) + 4 H(+)(out). In terms of biological role, core subunit of the mitochondrial membrane respiratory chain NADH dehydrogenase (Complex I) that is believed to belong to the minimal assembly required for catalysis. Complex I functions in the transfer of electrons from NADH to the respiratory chain. The immediate electron acceptor for the enzyme is believed to be ubiquinone. This Carassius auratus (Goldfish) protein is NADH-ubiquinone oxidoreductase chain 4 (MT-ND4).